Here is a 246-residue protein sequence, read N- to C-terminus: 1-(5-phosphoribosyl)-5-[(5-phosphoribosylamino)methylideneamino] imidazole-4-carboxamide isomerase (246 aa).

The active-site Proton acceptor is the aspartate 8. The active-site Proton donor is aspartate 129.

Belongs to the HisA/HisF family.

Its subcellular location is the cytoplasm. The catalysed reaction is 1-(5-phospho-beta-D-ribosyl)-5-[(5-phospho-beta-D-ribosylamino)methylideneamino]imidazole-4-carboxamide = 5-[(5-phospho-1-deoxy-D-ribulos-1-ylimino)methylamino]-1-(5-phospho-beta-D-ribosyl)imidazole-4-carboxamide. The protein operates within amino-acid biosynthesis; L-histidine biosynthesis; L-histidine from 5-phospho-alpha-D-ribose 1-diphosphate: step 4/9. The chain is 1-(5-phosphoribosyl)-5-[(5-phosphoribosylamino)methylideneamino] imidazole-4-carboxamide isomerase from Methylocella silvestris (strain DSM 15510 / CIP 108128 / LMG 27833 / NCIMB 13906 / BL2).